A 98-amino-acid polypeptide reads, in one-letter code: NADH-ubiquinone oxidoreductase chain 4L (98 aa).

The next 3 helical transmembrane spans lie at 1-21, 29-49, and 61-81; these read MSLVHINILMAFIMSLTGLLM, ALLCLEGMMLSLFVLATLTIL, and IILLVFAACEAAIGLALLVMI.

This sequence belongs to the complex I subunit 4L family. As to quaternary structure, core subunit of respiratory chain NADH dehydrogenase (Complex I) which is composed of 45 different subunits.

It localises to the mitochondrion inner membrane. It catalyses the reaction a ubiquinone + NADH + 5 H(+)(in) = a ubiquinol + NAD(+) + 4 H(+)(out). Its function is as follows. Core subunit of the mitochondrial membrane respiratory chain NADH dehydrogenase (Complex I) which catalyzes electron transfer from NADH through the respiratory chain, using ubiquinone as an electron acceptor. Part of the enzyme membrane arm which is embedded in the lipid bilayer and involved in proton translocation. This is NADH-ubiquinone oxidoreductase chain 4L (MT-ND4L) from Delphinapterus leucas (Beluga whale).